We begin with the raw amino-acid sequence, 151 residues long: Deoxyuridine 5'-triphosphate nucleotidohydrolase (151 aa).

Substrate-binding positions include 70–72 (RSG), Asn83, 87–89 (LID), and Lys97.

This sequence belongs to the dUTPase family. The cofactor is Mg(2+).

It carries out the reaction dUTP + H2O = dUMP + diphosphate + H(+). It functions in the pathway pyrimidine metabolism; dUMP biosynthesis; dUMP from dCTP (dUTP route): step 2/2. Its function is as follows. This enzyme is involved in nucleotide metabolism: it produces dUMP, the immediate precursor of thymidine nucleotides and it decreases the intracellular concentration of dUTP so that uracil cannot be incorporated into DNA. This chain is Deoxyuridine 5'-triphosphate nucleotidohydrolase, found in Idiomarina loihiensis (strain ATCC BAA-735 / DSM 15497 / L2-TR).